A 546-amino-acid polypeptide reads, in one-letter code: Chaperonin GroEL 4 (546 aa).

Residues 30-33 (TLGP), K51, 87-91 (DGTTT), G415, and D496 contribute to the ATP site.

It belongs to the chaperonin (HSP60) family. As to quaternary structure, forms a cylinder of 14 subunits composed of two heptameric rings stacked back-to-back. Interacts with the co-chaperonin GroES.

The protein resides in the cytoplasm. The catalysed reaction is ATP + H2O + a folded polypeptide = ADP + phosphate + an unfolded polypeptide.. In terms of biological role, together with its co-chaperonin GroES, plays an essential role in assisting protein folding. The GroEL-GroES system forms a nano-cage that allows encapsulation of the non-native substrate proteins and provides a physical environment optimized to promote and accelerate protein folding. The chain is Chaperonin GroEL 4 from Bradyrhizobium sp. (strain BTAi1 / ATCC BAA-1182).